The chain runs to 456 residues: Septin-10 (456 aa).

One can recognise a Septin-type G domain in the interval 40–306 (QGFCFNILCV…ELYRRCKLQE (267 aa)). The segment at 50-57 (GETGIGKS) is G1 motif. Residues 50-57 (GETGIGKS), G105, 186-194 (KADTISKSE), G240, and R255 each bind GTP. Residues 102–105 (NTVG) form a G3 motif region. Residues 185 to 188 (AKAD) are G4 motif. S418 is modified (phosphoserine).

This sequence belongs to the TRAFAC class TrmE-Era-EngA-EngB-Septin-like GTPase superfamily. Septin GTPase family. Septins polymerize into heterooligomeric protein complexes that form filaments, and can associate with cellular membranes, actin filaments and microtubules. GTPase activity is required for filament formation. Interacts with ADGB. Proteolytically cleaved in vitro in a calmodulin-dependent manner.

It localises to the cytoplasm. The protein localises to the cytoskeleton. It is found in the cell projection. Its subcellular location is the cilium. The protein resides in the flagellum. Filament-forming cytoskeletal GTPase. May play a role in cytokinesis (Potential). The polypeptide is Septin-10 (Rattus norvegicus (Rat)).